Here is a 403-residue protein sequence, read N- to C-terminus: Leu/Ile/Val-binding protein homolog 8 (403 aa).

The first 26 residues, 1–26, serve as a signal peptide directing secretion; that stretch reads MRLSRLLIGASLGVALSSTAFTAALA.

This sequence belongs to the leucine-binding protein family.

In terms of biological role, component of an amino-acid transport system. This is Leu/Ile/Val-binding protein homolog 8 from Brucella suis biovar 1 (strain 1330).